The primary structure comprises 180 residues: Probable cobalt-precorrin-6B C(15)-methyltransferase (decarboxylating) (180 aa).

S-adenosyl-L-methionine-binding positions include threonine 16, 40-44 (GCGSG), aspartate 61, and alanine 89.

Belongs to the methyltransferase superfamily. Archaeal-type CbiT family.

It carries out the reaction Co-precorrin-6B + S-adenosyl-L-methionine = Co-precorrin-7 + S-adenosyl-L-homocysteine + CO2. Its pathway is cofactor biosynthesis; adenosylcobalamin biosynthesis; cob(II)yrinate a,c-diamide from sirohydrochlorin (anaerobic route): step 8/10. Catalyzes the methylation of C-15 in cobalt-precorrin-6B followed by the decarboxylation of C-12 to form cobalt-precorrin-7. This Methanococcus vannielii (strain ATCC 35089 / DSM 1224 / JCM 13029 / OCM 148 / SB) protein is Probable cobalt-precorrin-6B C(15)-methyltransferase (decarboxylating).